The primary structure comprises 250 residues: Ribosomal RNA small subunit methyltransferase J (250 aa).

S-adenosyl-L-methionine-binding positions include 96–97 (RD) and aspartate 168.

It belongs to the methyltransferase superfamily. RsmJ family.

It localises to the cytoplasm. The enzyme catalyses guanosine(1516) in 16S rRNA + S-adenosyl-L-methionine = N(2)-methylguanosine(1516) in 16S rRNA + S-adenosyl-L-homocysteine + H(+). In terms of biological role, specifically methylates the guanosine in position 1516 of 16S rRNA. The sequence is that of Ribosomal RNA small subunit methyltransferase J from Neisseria gonorrhoeae (strain NCCP11945).